Consider the following 492-residue polypeptide: Trypanothione reductase (492 aa).

Asp35 to Cys52 lines the FAD pocket. Cys52 and Cys57 form a disulfide bridge. The Proton acceptor role is filled by His461.

The protein belongs to the class-I pyridine nucleotide-disulfide oxidoreductase family. In terms of assembly, homodimer. The cofactor is FAD.

It localises to the cytoplasm. It catalyses the reaction trypanothione + NADP(+) = trypanothione disulfide + NADPH + H(+). Trypanothione is the parasite analog of glutathione; this enzyme is the equivalent of glutathione reductase. The protein is Trypanothione reductase (TPR) of Trypanosoma brucei brucei.